We begin with the raw amino-acid sequence, 117 residues long: Large ribosomal subunit protein bL19 (117 aa).

The protein belongs to the bacterial ribosomal protein bL19 family.

In terms of biological role, this protein is located at the 30S-50S ribosomal subunit interface and may play a role in the structure and function of the aminoacyl-tRNA binding site. In Bacteroides fragilis (strain ATCC 25285 / DSM 2151 / CCUG 4856 / JCM 11019 / LMG 10263 / NCTC 9343 / Onslow / VPI 2553 / EN-2), this protein is Large ribosomal subunit protein bL19.